The following is a 296-amino-acid chain: Formylmethanofuran--tetrahydromethanopterin formyltransferase-like protein (296 aa).

Belongs to the FTR family.

This chain is Formylmethanofuran--tetrahydromethanopterin formyltransferase-like protein (ehaS), found in Methanothermobacter marburgensis (strain ATCC BAA-927 / DSM 2133 / JCM 14651 / NBRC 100331 / OCM 82 / Marburg) (Methanobacterium thermoautotrophicum).